Here is a 567-residue protein sequence, read N- to C-terminus: Wee1-like protein kinase 2 (567 aa).

Composition is skewed to basic and acidic residues over residues 1 to 12 (MDDKDIDKELRQ), 25 to 35 (EGQKKVEESRE), 42 to 51 (EKGEVQDSEA), and 64 to 77 (HELDTSSEKDKESP). The disordered stretch occupies residues 1–117 (MDDKDIDKEL…DSPSTPKTML (117 aa)). S76 carries the post-translational modification Phosphoserine. Residues 173-175 (KRK) carry the Nuclear localization signal motif. A Protein kinase domain is found at 212–486 (FLEVEKIGVG…AAALARNTVL (275 aa)). Residues 218 to 226 (IGVGEFGTV) and K241 contribute to the ATP site. Residues 315–329 (KLKDILLQISLGLNY) carry the Nuclear export signal motif. Residue D339 is the Proton acceptor of the active site. Residues N344 and D380 each contribute to the Mg(2+) site. Positions 494-519 (EELQQQLNLEKFKTATLERELREAQQ) form a coiled coil. The tract at residues 514-567 (LREAQQAQSPQGYTHHGDTGVSGTHTGSRSTKRLVGGKSARSSSFTSGEREPLH) is disordered.

Belongs to the protein kinase superfamily. Ser/Thr protein kinase family. WEE1 subfamily. In terms of processing, phosphorylated on serine residues. Phosphorylation leads to increase its activity. In terms of tissue distribution, expressed in oocytes (at protein level). May also be expressed in testis.

It localises to the nucleus. The enzyme catalyses L-tyrosyl-[protein] + ATP = O-phospho-L-tyrosyl-[protein] + ADP + H(+). Functionally, oocyte-specific protein tyrosine kinase that phosphorylates and inhibits CDK1/CDC2 and acts as a key regulator of meiosis during both prophase I and metaphase II. Required to maintain meiotic arrest in oocytes during the germinal vesicle (GV) stage, a long period of quiescence at dictyate prophase I, by phosphorylating CDK1 at 'Tyr-15', leading to inhibit CDK1 activity and prevent meiotic reentry. Also required for metaphase II exit during egg activation by phosphorylating CDK1 at 'Tyr-15', to ensure exit from meiosis in oocytes and promote pronuclear formation. The chain is Wee1-like protein kinase 2 (WEE2) from Homo sapiens (Human).